The chain runs to 606 residues: Pickpocket protein 28 (606 aa).

The disordered stretch occupies residues 1-26 (MRTLTESRRRQSGSSGCKKDSESDDD). 2 consecutive transmembrane segments (helical) span residues 66-86 (IFFGLAFVLVVILSVFFISNV) and 490-510 (GLLGLFMGFSIFSVIEIFFYI).

The protein belongs to the amiloride-sensitive sodium channel (TC 1.A.6) family. In terms of tissue distribution, expressed in water-sensing neurons in taste bristles on the proboscis but not in carbonation-sensing taste peg neurons (at protein level). Expressed in the tracheal system.

It is found in the cell membrane. In terms of biological role, osmosensitive ion channel that mediates the cellular and behavioral response to water. Plays an essential role in gustatory water reception. Part of a complex that plays a role in tracheal liquid clearance. Probable role in sodium transport. In Drosophila melanogaster (Fruit fly), this protein is Pickpocket protein 28 (ppk28).